The chain runs to 652 residues: p-hydroxybenzoic acid efflux pump subunit AaeB (652 aa).

Transmembrane regions (helical) follow at residues 8–28, 34–54, 64–84, 88–108, 118–138, 149–169, 367–387, 404–424, 429–449, 453–473, and 480–500; these read FPIK…HFNL, AVMT…GDPF, LRII…IATI, ALMM…SSLI, LAGY…SVLL, EIII…PRSV, LFWL…LAVI, FLYG…VIMP, SMLL…ILIQ, IGTL…NPMT, and LDNA…ILLI.

This sequence belongs to the aromatic acid exporter ArAE (TC 2.A.85) family.

It localises to the cell inner membrane. Functionally, forms an efflux pump with AaeA. Could function as a metabolic relief valve, allowing to eliminate certain compounds when they accumulate to high levels in the cell. The polypeptide is p-hydroxybenzoic acid efflux pump subunit AaeB (Erwinia billingiae (strain Eb661)).